A 231-amino-acid chain; its full sequence is Ribosome maturation factor RimM (231 aa).

The tract at residues 1-29 (MSERDSGSSGRAKAKRQPGAKAPFGPFVR) is disordered. The PRC barrel domain maps to 150–231 (TDEYYWVDLV…KIIVDWEADY (82 aa)).

This sequence belongs to the RimM family. In terms of assembly, binds ribosomal protein uS19.

It is found in the cytoplasm. An accessory protein needed during the final step in the assembly of 30S ribosomal subunit, possibly for assembly of the head region. Essential for efficient processing of 16S rRNA. May be needed both before and after RbfA during the maturation of 16S rRNA. It has affinity for free ribosomal 30S subunits but not for 70S ribosomes. The sequence is that of Ribosome maturation factor RimM from Paraburkholderia phymatum (strain DSM 17167 / CIP 108236 / LMG 21445 / STM815) (Burkholderia phymatum).